A 992-amino-acid polypeptide reads, in one-letter code: Disks large-associated protein 4 (992 aa).

The segment covering 1-20 (MKGLGDSRPRHLSDSLDPPH) has biased composition (basic and acidic residues). 3 disordered regions span residues 1-30 (MKGL…TDRN), 47-66 (PGQN…QLPP), and 157-206 (LEGT…GWWS). Gly residues predominate over residues 162–171 (GKVGGNGSKK). Residues 172-194 (GGMEDGKGRRAKSKERAKAGEPK) show a composition bias toward basic and acidic residues. Phosphoserine occurs at positions 206 and 207. Omega-N-methylarginine is present on Arg-291. The interval 342-396 (STTLLSPRETDAAAEGPIPCRRMRSGSYIKAMGDEDSDESGGSPKPSPKTAARRQ) is disordered. A phosphoserine mark is found at Ser-378, Ser-381, Ser-388, Ser-405, Ser-415, and Ser-421. Disordered stretches follow at residues 527 to 751 (SVSL…GPRQ), 763 to 798 (SYGD…AQPG), and 915 to 992 (TPEK…QTRL). Residues 528 to 554 (VSLQSLSPPPSTGSLSNSRTLPSSSCL) show a composition bias toward low complexity. Residues 576–591 (VTVQSSTESAQDTYLD) are compositionally biased toward polar residues. Ser-580, Ser-581, Ser-609, Ser-611, Ser-665, and Ser-744 each carry phosphoserine. Residues 600–620 (TSQSGLSNSSDSLDSSTRPPS) are compositionally biased toward low complexity. Position 915 is a phosphothreonine (Thr-915). Basic and acidic residues-rich tracts occupy residues 915 to 925 (TPEKRKEEKKP) and 940 to 958 (VSRD…EARK). The span at 969–978 (VRQNSATESA) shows a compositional bias: polar residues. A Phosphoserine modification is found at Ser-973.

This sequence belongs to the SAPAP family. In terms of assembly, interacts with DLG1 and DLG4/PSD-95.

The protein localises to the membrane. Functionally, may play a role in the molecular organization of synapses and neuronal cell signaling. Could be an adapter protein linking ion channel to the subsynaptic cytoskeleton. May induce enrichment of PSD-95/SAP90 at the plasma membrane. The sequence is that of Disks large-associated protein 4 (DLGAP4) from Homo sapiens (Human).